A 112-amino-acid polypeptide reads, in one-letter code: Small ribosomal subunit protein bS6 (112 aa).

The protein belongs to the bacterial ribosomal protein bS6 family.

In terms of biological role, binds together with bS18 to 16S ribosomal RNA. The polypeptide is Small ribosomal subunit protein bS6 (Hyphomonas neptunium (strain ATCC 15444)).